Here is a 53-residue protein sequence, read N- to C-terminus: Conotoxin Vc5.3 (53 aa).

The N-terminal stretch at 1–15 (VILLLLTASAPSVDA) is a signal peptide. A propeptide spanning residues 16–41 (RPKTEDVPLSSFRDNTKSTLQRLLKR) is cleaved from the precursor.

It belongs to the conotoxin T superfamily. Contains 2 disulfide bonds that can be either 'C1-C3, C2-C4' or 'C1-C4, C2-C3', since these disulfide connectivities have been observed for conotoxins with cysteine framework V (for examples, see AC P0DQQ7 and AC P81755). As to expression, expressed by the venom duct.

The protein localises to the secreted. The polypeptide is Conotoxin Vc5.3 (Conus victoriae (Queen Victoria cone)).